Reading from the N-terminus, the 142-residue chain is Hemoglobin subunit zeta (142 aa).

Residue Ser-2 is modified to N-acetylserine. A Globin domain is found at 2 to 142 (SLTRTERTII…VSGVLTEKYR (141 aa)). Thr-29 carries the phosphothreonine modification. Residue Ser-53 is modified to Phosphoserine. His-59 is a binding site for heme b. Phosphoserine is present on residues Ser-73 and Ser-82. Heme b is bound at residue His-88.

The protein belongs to the globin family. As to quaternary structure, heterotetramer of two zeta chains and beta-type chains.

In terms of biological role, the zeta chain is an alpha-type chain of mammalian embryonic hemoglobin. In Capra hircus (Goat), this protein is Hemoglobin subunit zeta (HBZ1).